Here is a 236-residue protein sequence, read N- to C-terminus: uncharacterized protein (236 aa).

Residues 4 to 225 enclose the ABC transporter domain; it reads LLEASIEQAG…TGLEGQSLLD (222 aa). 38-45 contacts ATP; the sequence is GANGAGKS.

The protein belongs to the ABC transporter superfamily.

This is an uncharacterized protein from Bacillus subtilis (strain 168).